Reading from the N-terminus, the 83-residue chain is Mu-conotoxin-like PnMKLT1-014 (83 aa).

The N-terminal stretch at 1–22 (MNLTCMMIVAVLFLTAWTFVMA) is a signal peptide. Positions 23–50 (DDSNNGLANLFSKSRYEMEDPEPSKLEK) are excised as a propeptide. Cystine bridges form between C54/C72, C61/C77, and C71/C82.

This sequence belongs to the conotoxin O1 superfamily. As to expression, expressed by the venom duct.

The protein resides in the secreted. In terms of biological role, mu-conotoxins block voltage-gated sodium channels (Nav). The sequence is that of Mu-conotoxin-like PnMKLT1-014 from Conus pennaceus (Feathered cone).